Here is a 119-residue protein sequence, read N- to C-terminus: Large ribosomal subunit protein uL14c (119 aa).

It belongs to the universal ribosomal protein uL14 family. Part of the 50S ribosomal subunit.

The protein localises to the plastid. It localises to the chloroplast. Its function is as follows. Binds to 23S rRNA. The chain is Large ribosomal subunit protein uL14c from Ostreococcus tauri.